A 302-amino-acid chain; its full sequence is Putative fructose-bisphosphate aldolase (302 aa).

D86 (proton donor) is an active-site residue. Zn(2+)-binding residues include H87, D116, E146, and H192. Residue G193 coordinates dihydroxyacetone phosphate. Position 223 (H223) interacts with Zn(2+). Residues 224–226 (GAD) and 245–248 (NVNR) contribute to the dihydroxyacetone phosphate site.

It belongs to the class II fructose-bisphosphate aldolase family. As to quaternary structure, homodimer. Zn(2+) serves as cofactor.

The enzyme catalyses beta-D-fructose 1,6-bisphosphate = D-glyceraldehyde 3-phosphate + dihydroxyacetone phosphate. Its pathway is carbohydrate degradation; glycolysis; D-glyceraldehyde 3-phosphate and glycerone phosphate from D-glucose: step 4/4. Catalyzes the aldol condensation of dihydroxyacetone phosphate (DHAP or glycerone-phosphate) with glyceraldehyde 3-phosphate (G3P) to form fructose 1,6-bisphosphate (FBP) in gluconeogenesis and the reverse reaction in glycolysis. The protein is Putative fructose-bisphosphate aldolase of Coccidioides immitis (strain RS) (Valley fever fungus).